The primary structure comprises 193 residues: Ribonuclease HII (193 aa).

Residues 15–193 (YIVAGIDEAG…PYHRRSFKCC (179 aa)) form the RNase H type-2 domain. Positions 21, 22, and 112 each coordinate a divalent metal cation.

The protein belongs to the RNase HII family. The cofactor is Mn(2+). It depends on Mg(2+) as a cofactor.

It localises to the cytoplasm. The enzyme catalyses Endonucleolytic cleavage to 5'-phosphomonoester.. Functionally, endonuclease that specifically degrades the RNA of RNA-DNA hybrids. The protein is Ribonuclease HII of Rickettsia felis (strain ATCC VR-1525 / URRWXCal2) (Rickettsia azadi).